A 123-amino-acid chain; its full sequence is Large ribosomal subunit protein bL17 (123 aa).

The protein belongs to the bacterial ribosomal protein bL17 family. In terms of assembly, part of the 50S ribosomal subunit. Contacts protein L32.

This chain is Large ribosomal subunit protein bL17, found in Borreliella burgdorferi (strain ZS7) (Borrelia burgdorferi).